The following is a 231-amino-acid chain: Phosphatidylserine decarboxylase proenzyme (231 aa).

The active-site Schiff-base intermediate with substrate; via pyruvic acid is the Ser-200. Position 200 is a pyruvic acid (Ser); by autocatalysis (Ser-200).

The protein belongs to the phosphatidylserine decarboxylase family. PSD-A subfamily. Heterodimer of a large membrane-associated beta subunit and a small pyruvoyl-containing alpha subunit. Pyruvate serves as cofactor. Is synthesized initially as an inactive proenzyme. Formation of the active enzyme involves a self-maturation process in which the active site pyruvoyl group is generated from an internal serine residue via an autocatalytic post-translational modification. Two non-identical subunits are generated from the proenzyme in this reaction, and the pyruvate is formed at the N-terminus of the alpha chain, which is derived from the carboxyl end of the proenzyme. The post-translation cleavage follows an unusual pathway, termed non-hydrolytic serinolysis, in which the side chain hydroxyl group of the serine supplies its oxygen atom to form the C-terminus of the beta chain, while the remainder of the serine residue undergoes an oxidative deamination to produce ammonia and the pyruvoyl prosthetic group on the alpha chain.

The protein localises to the cell membrane. The catalysed reaction is a 1,2-diacyl-sn-glycero-3-phospho-L-serine + H(+) = a 1,2-diacyl-sn-glycero-3-phosphoethanolamine + CO2. It functions in the pathway phospholipid metabolism; phosphatidylethanolamine biosynthesis; phosphatidylethanolamine from CDP-diacylglycerol: step 2/2. Catalyzes the formation of phosphatidylethanolamine (PtdEtn) from phosphatidylserine (PtdSer). The sequence is that of Phosphatidylserine decarboxylase proenzyme from Mycobacterium tuberculosis (strain ATCC 25177 / H37Ra).